The sequence spans 445 residues: ATP synthase subunit b-delta (445 aa).

The interval 1-168 (MSTFIGQLVG…PAAAEVERPV (168 aa)) is ATP synthase subunit b. Residues 4–24 (FIGQLVGFAAIVFLVWRYVVP) traverse the membrane as a helical segment. An ATP synthase subunit delta region spans residues 169–445 (AAKMRSASRR…LTAAEAQLPD (277 aa)).

It in the N-terminal section; belongs to the ATPase B chain family. In the C-terminal section; belongs to the ATPase delta chain family. In terms of assembly, F-type ATPases have 2 components, F(1) - the catalytic core - and F(0) - the membrane proton channel. F(1) has five subunits: alpha(3), beta(3), gamma(1), delta(1), epsilon(1). F(0) has three main subunits: a(1), b(2) and c(10-14). The alpha and beta chains form an alternating ring which encloses part of the gamma chain. F(1) is attached to F(0) by a central stalk formed by the gamma and epsilon chains, while a peripheral stalk is formed by the delta and b chains.

The protein resides in the cell membrane. F(1)F(0) ATP synthase produces ATP from ADP in the presence of a proton or sodium gradient. F-type ATPases consist of two structural domains, F(1) containing the extramembraneous catalytic core and F(0) containing the membrane proton channel, linked together by a central stalk and a peripheral stalk. During catalysis, ATP synthesis in the catalytic domain of F(1) is coupled via a rotary mechanism of the central stalk subunits to proton translocation. In terms of biological role, this fusion protein includes a component of the F(0) channel (subunit b) and of the F(1) subunit (subunit delta). Two copies of subunit b and one of delta together form the peripheral 'stator' stalk which links F(1) to F(0). The polypeptide is ATP synthase subunit b-delta (atpFH) (Mycobacterium ulcerans (strain Agy99)).